We begin with the raw amino-acid sequence, 75 residues long: Gas vesicle protein S (75 aa).

It belongs to the gas vesicle GvpA family.

The protein resides in the gas vesicle. Probably a minor component of the gas vesicle. Gas vesicles are hollow, gas filled proteinaceous nanostructures found in some microorganisms. It is not clear what function gas vesicles perform in soil bacteria. The protein is Gas vesicle protein S of Streptomyces sp. (strain CB03234).